Reading from the N-terminus, the 578-residue chain is A-type ATP synthase subunit A (578 aa).

ATP is bound at residue 228 to 235 (GPFGSGKT).

The protein belongs to the ATPase alpha/beta chains family. Has multiple subunits with at least A(3), B(3), C, D, E, F, H, I and proteolipid K(x).

It localises to the cell membrane. It carries out the reaction ATP + H2O + 4 H(+)(in) = ADP + phosphate + 5 H(+)(out). Functionally, component of the A-type ATP synthase that produces ATP from ADP in the presence of a proton gradient across the membrane. The A chain is the catalytic subunit. The sequence is that of A-type ATP synthase subunit A from Methanosarcina barkeri (strain Fusaro / DSM 804).